A 573-amino-acid chain; its full sequence is Arylsulfatase I (573 aa).

A signal peptide spans 1 to 23 (MHALSGFSLVSLLSLGYLSWDWA). 3 residues coordinate Ca(2+): D55, D56, and C93. The active-site Nucleophile is C93. C93 carries the post-translational modification 3-oxoalanine (Cys). A substrate-binding site is contributed by K147. H149 is an active-site residue. H239 is a substrate binding site. 2 N-linked (GlcNAc...) asparagine glycosylation sites follow: N276 and N288. Residues D297 and N298 each coordinate Ca(2+). K315 contributes to the substrate binding site. N-linked (GlcNAc...) asparagine glycosylation is found at N466 and N496. The disordered stretch occupies residues 506–550 (AANPRAHPDFNGGAWGPWASDEDEEEEDEEEEGRARSFPRGRRKK). The segment covering 525-537 (SDEDEEEEDEEEE) has biased composition (acidic residues).

It belongs to the sulfatase family. Requires Ca(2+) as cofactor. In terms of processing, the oxidation of Cys-93 residue to 3-oxoalanine (also known as C(alpha)-formylglycine) by SUMF1/Sulfatase-modifying factor 1, seems critical for catalytic activity.

It is found in the secreted. Its subcellular location is the endoplasmic reticulum. Functionally, displays arylsulfatase activity at neutral pH, when co-expressed with SUMF1; arylsulfatase activity is measured in the secretion medium of retinal cell line, but no activity is recorded when measured in cell extracts. The sequence is that of Arylsulfatase I (Arsi) from Rattus norvegicus (Rat).